Here is a 238-residue protein sequence, read N- to C-terminus: Endonuclease V (238 aa).

Positions 46 and 116 each coordinate Mg(2+).

Belongs to the endonuclease V family. Mg(2+) is required as a cofactor.

The protein resides in the cytoplasm. The catalysed reaction is Endonucleolytic cleavage at apurinic or apyrimidinic sites to products with a 5'-phosphate.. In terms of biological role, DNA repair enzyme involved in the repair of deaminated bases. Selectively cleaves double-stranded DNA at the second phosphodiester bond 3' to a deoxyinosine leaving behind the intact lesion on the nicked DNA. The polypeptide is Endonuclease V (Bacillus subtilis (strain 168)).